The following is a 255-amino-acid chain: uncharacterized protein (255 aa).

The protein belongs to the methyltransferase superfamily.

This is an uncharacterized protein from Mycolicibacterium vanbaalenii (strain DSM 7251 / JCM 13017 / BCRC 16820 / KCTC 9966 / NRRL B-24157 / PYR-1) (Mycobacterium vanbaalenii).